Reading from the N-terminus, the 382-residue chain is Toluene efflux pump periplasmic linker protein TtgD (382 aa).

An N-terminal signal peptide occupies residues 1–23 (MRLERALRARQLIPLAAIWLLVG). C24 is lipidated: N-palmitoyl cysteine. C24 is lipidated: S-diacylglycerol cysteine. The stretch at 100 to 136 (YEALLARAEASLLTAQNLARRYERLLDTNAISQQQYD) forms a coiled coil.

It belongs to the membrane fusion protein (MFP) (TC 8.A.1) family.

It is found in the cell inner membrane. The periplasmic linker protein component of an inducible organic solvent efflux pump. Involved in export of toluene and styrene but not of m-xylene, propylbenzene or ethylbenzene. Is not involved in antibiotic or AMP efflux. The sequence is that of Toluene efflux pump periplasmic linker protein TtgD (ttgD) from Pseudomonas putida (strain DOT-T1E).